A 316-amino-acid polypeptide reads, in one-letter code: Transaldolase (316 aa).

The Schiff-base intermediate with substrate role is filled by lysine 132.

This sequence belongs to the transaldolase family. Type 1 subfamily. As to quaternary structure, homodimer.

The protein resides in the cytoplasm. It catalyses the reaction D-sedoheptulose 7-phosphate + D-glyceraldehyde 3-phosphate = D-erythrose 4-phosphate + beta-D-fructose 6-phosphate. The protein operates within carbohydrate degradation; pentose phosphate pathway; D-glyceraldehyde 3-phosphate and beta-D-fructose 6-phosphate from D-ribose 5-phosphate and D-xylulose 5-phosphate (non-oxidative stage): step 2/3. In terms of biological role, transaldolase is important for the balance of metabolites in the pentose-phosphate pathway. The polypeptide is Transaldolase (Vibrio vulnificus (strain CMCP6)).